Consider the following 585-residue polypeptide: A-type ATP synthase subunit A (585 aa).

232–239 is an ATP binding site; it reads GPFGSGKT.

It belongs to the ATPase alpha/beta chains family. As to quaternary structure, has multiple subunits with at least A(3), B(3), C, D, E, F, H, I and proteolipid K(x).

It localises to the cell membrane. The enzyme catalyses ATP + H2O + 4 H(+)(in) = ADP + phosphate + 5 H(+)(out). In terms of biological role, component of the A-type ATP synthase that produces ATP from ADP in the presence of a proton gradient across the membrane. The A chain is the catalytic subunit. This Methanosphaera stadtmanae (strain ATCC 43021 / DSM 3091 / JCM 11832 / MCB-3) protein is A-type ATP synthase subunit A.